The following is a 555-amino-acid chain: T-complex protein 1 subunit eta (555 aa).

It belongs to the TCP-1 chaperonin family. Heterooligomeric complex of about 850 to 900 kDa that forms two stacked rings, 12 to 16 nm in diameter.

The protein resides in the cytoplasm. Molecular chaperone; assists the folding of proteins upon ATP hydrolysis. Known to play a role, in vitro, in the folding of actin and tubulin. The polypeptide is T-complex protein 1 subunit eta (cct7) (Dictyostelium discoideum (Social amoeba)).